We begin with the raw amino-acid sequence, 468 residues long: Procollagen C-endopeptidase enhancer 1 (468 aa).

An N-terminal signal peptide occupies residues 1 to 24; that stretch reads MLPAALTSLLGPFLLAWVLPLARG. A glycan (N-linked (GlcNAc...) asparagine) is linked at Asn-28. Cystine bridges form between Cys-36–Cys-62, Cys-89–Cys-111, Cys-158–Cys-185, and Cys-212–Cys-235. CUB domains follow at residues 36–148 and 158–272; these read CGGD…YSGR and CGGR…YRTL. Thr-41 bears the Phosphothreonine mark. Ser-49 bears the Phosphoserine mark. The interval 271 to 341 is disordered; sequence TLPRDAVEKE…VAPDAPSITC (71 aa). Basic and acidic residues predominate over residues 272-281; it reads LPRDAVEKES. Disulfide bonds link Cys-341–Cys-409 and Cys-356–Cys-460. An NTR domain is found at 341-460; it reads CPKQYKRSGT…ILSNLSKRKC (120 aa). Asn-454 carries an N-linked (GlcNAc...) asparagine glycan.

In terms of assembly, interacts with EFEMP2. In terms of tissue distribution, expressed at highest levels in collagen-rich tissues, especially tendon. Also expressed in cornea and sterna.

It is found in the secreted. Binds to the C-terminal propeptide of type I procollagen and enhances procollagen C-proteinase activity. The sequence is that of Procollagen C-endopeptidase enhancer 1 (Pcolce) from Rattus norvegicus (Rat).